The following is a 95-amino-acid chain: Co-chaperonin GroES (95 aa).

This sequence belongs to the GroES chaperonin family. As to quaternary structure, heptamer of 7 subunits arranged in a ring. Interacts with the chaperonin GroEL.

The protein resides in the cytoplasm. Together with the chaperonin GroEL, plays an essential role in assisting protein folding. The GroEL-GroES system forms a nano-cage that allows encapsulation of the non-native substrate proteins and provides a physical environment optimized to promote and accelerate protein folding. GroES binds to the apical surface of the GroEL ring, thereby capping the opening of the GroEL channel. The polypeptide is Co-chaperonin GroES (Chlorobium luteolum (strain DSM 273 / BCRC 81028 / 2530) (Pelodictyon luteolum)).